We begin with the raw amino-acid sequence, 376 residues long: tRNA 2-selenouridine synthase (376 aa).

The 124-residue stretch at 15–138 (FVAGKPLIDL…MRQYLIGVIE (124 aa)) folds into the Rhodanese domain. Cysteine 98 (S-selanylcysteine intermediate) is an active-site residue.

It belongs to the SelU family. In terms of assembly, monomer.

The enzyme catalyses 5-methylaminomethyl-2-thiouridine(34) in tRNA + selenophosphate + (2E)-geranyl diphosphate + H2O + H(+) = 5-methylaminomethyl-2-selenouridine(34) in tRNA + (2E)-thiogeraniol + phosphate + diphosphate. The catalysed reaction is 5-methylaminomethyl-2-thiouridine(34) in tRNA + (2E)-geranyl diphosphate = 5-methylaminomethyl-S-(2E)-geranyl-thiouridine(34) in tRNA + diphosphate. It carries out the reaction 5-methylaminomethyl-S-(2E)-geranyl-thiouridine(34) in tRNA + selenophosphate + H(+) = 5-methylaminomethyl-2-(Se-phospho)selenouridine(34) in tRNA + (2E)-thiogeraniol. It catalyses the reaction 5-methylaminomethyl-2-(Se-phospho)selenouridine(34) in tRNA + H2O = 5-methylaminomethyl-2-selenouridine(34) in tRNA + phosphate. Involved in the post-transcriptional modification of the uridine at the wobble position (U34) of tRNA(Lys), tRNA(Glu) and tRNA(Gln). Catalyzes the conversion of 2-thiouridine (S2U-RNA) to 2-selenouridine (Se2U-RNA). Acts in a two-step process involving geranylation of 2-thiouridine (S2U) to S-geranyl-2-thiouridine (geS2U) and subsequent selenation of the latter derivative to 2-selenouridine (Se2U) in the tRNA chain. This is tRNA 2-selenouridine synthase from Shewanella oneidensis (strain ATCC 700550 / JCM 31522 / CIP 106686 / LMG 19005 / NCIMB 14063 / MR-1).